Reading from the N-terminus, the 127-residue chain is Large ribosomal subunit protein eL8 (127 aa).

This sequence belongs to the eukaryotic ribosomal protein eL8 family. Part of the 50S ribosomal subunit. Probably part of the RNase P complex.

It localises to the cytoplasm. Multifunctional RNA-binding protein that recognizes the K-turn motif in ribosomal RNA, the RNA component of RNase P, box H/ACA, box C/D and box C'/D' sRNAs. The chain is Large ribosomal subunit protein eL8 from Picrophilus torridus (strain ATCC 700027 / DSM 9790 / JCM 10055 / NBRC 100828 / KAW 2/3).